A 114-amino-acid polypeptide reads, in one-letter code: Ribonuclease P protein component (114 aa).

This sequence belongs to the RnpA family. In terms of assembly, consists of a catalytic RNA component (M1 or rnpB) and a protein subunit.

The enzyme catalyses Endonucleolytic cleavage of RNA, removing 5'-extranucleotides from tRNA precursor.. Functionally, RNaseP catalyzes the removal of the 5'-leader sequence from pre-tRNA to produce the mature 5'-terminus. It can also cleave other RNA substrates such as 4.5S RNA. The protein component plays an auxiliary but essential role in vivo by binding to the 5'-leader sequence and broadening the substrate specificity of the ribozyme. The sequence is that of Ribonuclease P protein component from Legionella pneumophila (strain Paris).